Consider the following 178-residue polypeptide: CASP-like protein 4D1 (178 aa).

N-acetylalanine is present on alanine 2. The Cytoplasmic portion of the chain corresponds to 2–14 (APPPPAPPSVTLR). The chain crosses the membrane as a helical span at residues 15–35 (TVLLLLRVLTAAFLLITVVLI). Residues 36–60 (STNTVTLEISSTSIKLPFNDVYAYR) are Extracellular-facing. A helical membrane pass occupies residues 61–81 (YMLSAAVIGLVYAVVQLFLTI). Over 82 to 97 (SQFATGKTHPLTYQFD) the chain is Cytoplasmic. The chain crosses the membrane as a helical span at residues 98–118 (FYGDKVISYLLATGSAAGFGV). At 119–149 (SKDLKDTYIALIEFDSTDPVDKFFSKGYASA) the chain is on the extracellular side. The helical transmembrane segment at 150-170 (SLLLFAFVSLAVLSVFSSLAL) threads the bilayer. At 171–178 (SKRPVPVS) the chain is on the cytoplasmic side.

This sequence belongs to the Casparian strip membrane proteins (CASP) family. Homodimer and heterodimers. In terms of tissue distribution, expressed in the root epidermis.

It is found in the cell membrane. The chain is CASP-like protein 4D1 from Arabidopsis thaliana (Mouse-ear cress).